The following is a 596-amino-acid chain: Linalool synthase TPS3, chloroplastic (596 aa).

The transit peptide at 1 to 39 (MISSLNPLFTTHRSGVIAQQFFASSAAASINSVSSLKIA) directs the protein to the chloroplast. (2E)-geranyl diphosphate-binding residues include Arg-308, Asp-345, Asp-349, Arg-486, and Asn-489. Residues Asp-345 and Asp-349 each contribute to the Mg(2+) site. Positions 345-349 (DDIYD) match the DDXXD motif motif. Residues Asn-489, Thr-493, and Ser-497 each coordinate Mg(2+).

It belongs to the terpene synthase family. Tpsb subfamily. Monomer. Mg(2+) is required as a cofactor. The cofactor is Mn(2+). Expressed in flowers and fruits.

It localises to the plastid. Its subcellular location is the chloroplast. The catalysed reaction is (2E)-geranyl diphosphate = beta-myrcene + diphosphate. It catalyses the reaction (2E)-geranyl diphosphate + H2O = linalool + diphosphate. The enzyme catalyses (2E)-geranyl diphosphate = (Z)-beta-ocimene + diphosphate. It carries out the reaction (2E)-geranyl diphosphate = (E)-beta-ocimene + diphosphate. Its pathway is secondary metabolite biosynthesis; terpenoid biosynthesis. In terms of biological role, monoterpene synthase (mono-TPS) involved in the biosynthesis of monoterpenes natural products, constituent of coffee beverage aroma. Catalyzes the conversion of (2E)-geranyl diphosphate (GPP) into linalool and beta-myrcene, and, as minor products, cis-ocimene and trans-ocimene. Not able to use geranylgeranyl pyrophosphate (GGPP) and farnesyl pyrophosphate (FPP) as substrates. This is Linalool synthase TPS3, chloroplastic from Coffea arabica (Arabian coffee).